A 386-amino-acid polypeptide reads, in one-letter code: MATGDLKRSLRKLEQVLRSLNYPNEVDYVGLMKGDTAASLPIISYSLTSYSPHVAELLMESNIELIAKNDVRFTDTVYKLLRDQFDYKPILTKKQFIQSGFAEWKIEIVCDILNCVMKKHKKLIGLDKNSSCQRKKSISEKPEPCSSREKCPAEAVGIDVTGRFMTSGKKKAVVIRHLYTEENVGVPEGTVTSTEVSEGCDELEEQSSDIRIPEAQAPEVKAELQDMCDNPELTALQIALAECQEKLKKLTWIEKRLECLEATTKGKVMVDEKAWNNILSRVTLLETEMLLSKKNESVEPNTTSEDSESVSGVDVVPYDKKYSVEGPASTCHSSGYSTVSSATVPRSSTINYCGLNNFSEETTMQKMERMKKMFEETAELLKCSSR.

Residues 11 to 194 form a binds with microtubules and centrioles region; it reads RKLEQVLRSL…GVPEGTVTST (184 aa). Positions 232-262 form a coiled coil; it reads ELTALQIALAECQEKLKKLTWIEKRLECLEA. S329 bears the Phosphoserine mark. The stretch at 359 to 382 forms a coiled coil; sequence SEETTMQKMERMKKMFEETAELLK.

In terms of assembly, interacts with CROCC. Interacts with POC1B; the interaction is direct and recruits POC1B to centriolar microtubules. Binds to centriolar microtubules.

It localises to the cytoplasm. It is found in the cytoskeleton. The protein resides in the microtubule organizing center. The protein localises to the centrosome. Its subcellular location is the centriole. It localises to the spindle pole. It is found in the midbody. Centriole-enriched microtubule-binding protein involved in centriole biogenesis. In collaboration with CEP295 and POC1B, is required for the centriole-to-centrosome conversion by ensuring the formation of bona fide centriole wall. Functions as a linker component that maintains centrosome cohesion. Associates with CROCC and regulates its stability and localization to the centrosome. This Rattus norvegicus (Rat) protein is Centrosomal protein of 44 kDa (Cep44).